Here is a 419-residue protein sequence, read N- to C-terminus: UDP-N-acetylglucosamine 1-carboxyvinyltransferase (419 aa).

22–23 (KN) contributes to the phosphoenolpyruvate binding site. Residue R92 participates in UDP-N-acetyl-alpha-D-glucosamine binding. C116 functions as the Proton donor in the catalytic mechanism. C116 bears the 2-(S-cysteinyl)pyruvic acid O-phosphothioketal mark. UDP-N-acetyl-alpha-D-glucosamine-binding positions include 121 to 125 (RPIDL), D306, and I328.

The protein belongs to the EPSP synthase family. MurA subfamily.

It localises to the cytoplasm. The enzyme catalyses phosphoenolpyruvate + UDP-N-acetyl-alpha-D-glucosamine = UDP-N-acetyl-3-O-(1-carboxyvinyl)-alpha-D-glucosamine + phosphate. The protein operates within cell wall biogenesis; peptidoglycan biosynthesis. In terms of biological role, cell wall formation. Adds enolpyruvyl to UDP-N-acetylglucosamine. Target for the antibiotic fosfomycin. This Streptococcus pneumoniae (strain Hungary19A-6) protein is UDP-N-acetylglucosamine 1-carboxyvinyltransferase.